Here is a 379-residue protein sequence, read N- to C-terminus: 1-deoxy-D-xylulose 5-phosphate reductoisomerase (379 aa).

Residues Thr10, Gly11, Ser12, Ile13, Arg38, Asn39, and Asn121 each coordinate NADPH. 1-deoxy-D-xylulose 5-phosphate is bound at residue Lys122. Residue Glu123 coordinates NADPH. Asp147 is a Mn(2+) binding site. Positions 148, 149, 173, and 196 each coordinate 1-deoxy-D-xylulose 5-phosphate. Glu149 serves as a coordination point for Mn(2+). Position 202 (Gly202) interacts with NADPH. 1-deoxy-D-xylulose 5-phosphate is bound by residues Ser209, Asn214, Lys215, and Glu218. Position 218 (Glu218) interacts with Mn(2+).

It belongs to the DXR family. Mg(2+) is required as a cofactor. Mn(2+) serves as cofactor.

It catalyses the reaction 2-C-methyl-D-erythritol 4-phosphate + NADP(+) = 1-deoxy-D-xylulose 5-phosphate + NADPH + H(+). Its pathway is isoprenoid biosynthesis; isopentenyl diphosphate biosynthesis via DXP pathway; isopentenyl diphosphate from 1-deoxy-D-xylulose 5-phosphate: step 1/6. Catalyzes the NADPH-dependent rearrangement and reduction of 1-deoxy-D-xylulose-5-phosphate (DXP) to 2-C-methyl-D-erythritol 4-phosphate (MEP). This chain is 1-deoxy-D-xylulose 5-phosphate reductoisomerase, found in Chlamydia trachomatis serovar A (strain ATCC VR-571B / DSM 19440 / HAR-13).